A 438-amino-acid chain; its full sequence is Coenzyme A disulfide reductase (438 aa).

8–33 (GAVAGGATCASQIRRLDKESDIIIFE) lines the FAD pocket. Residues Thr15, Gln19, Arg22, Ser39, and Asn42 each coordinate substrate. Cys43 serves as the catalytic Nucleophile. The active-site Redox-active is Cys43. Residue Lys71 coordinates substrate. 151–166 (VLVVGAGYVSLEVLEN) is an NADP(+) binding site. 267–277 (TNVPNIYAIGD) is a binding site for FAD. His299 lines the substrate pocket. Tyr419 is an FAD binding site. Lys427 is a binding site for substrate.

The protein belongs to the class-III pyridine nucleotide-disulfide oxidoreductase family. In terms of assembly, homodimer. Requires FAD as cofactor.

The enzyme catalyses NADP(+) + 2 CoA = CoA-disulfide + NADPH + H(+). In terms of biological role, catalyzes specifically the NADPH-dependent reduction of coenzyme A disulfide. The sequence is that of Coenzyme A disulfide reductase from Staphylococcus aureus (strain USA300).